The following is a 403-amino-acid chain: Multifunctional CCA protein (403 aa).

ATP-binding residues include Gly-8 and Arg-11. 2 residues coordinate CTP: Gly-8 and Arg-11. Mg(2+) is bound by residues Asp-21 and Asp-23. Positions 91, 137, and 140 each coordinate ATP. CTP-binding residues include Arg-91, Arg-137, and Arg-140. Residues 228-329 (TGIHTLMVAK…LKVLGLLDVW (102 aa)) enclose the HD domain.

The protein belongs to the tRNA nucleotidyltransferase/poly(A) polymerase family. Bacterial CCA-adding enzyme type 1 subfamily. As to quaternary structure, monomer. Can also form homodimers and oligomers. Requires Mg(2+) as cofactor. The cofactor is Ni(2+).

It catalyses the reaction a tRNA precursor + 2 CTP + ATP = a tRNA with a 3' CCA end + 3 diphosphate. The enzyme catalyses a tRNA with a 3' CCA end + 2 CTP + ATP = a tRNA with a 3' CCACCA end + 3 diphosphate. Catalyzes the addition and repair of the essential 3'-terminal CCA sequence in tRNAs without using a nucleic acid template. Adds these three nucleotides in the order of C, C, and A to the tRNA nucleotide-73, using CTP and ATP as substrates and producing inorganic pyrophosphate. tRNA 3'-terminal CCA addition is required both for tRNA processing and repair. Also involved in tRNA surveillance by mediating tandem CCA addition to generate a CCACCA at the 3' terminus of unstable tRNAs. While stable tRNAs receive only 3'-terminal CCA, unstable tRNAs are marked with CCACCA and rapidly degraded. The chain is Multifunctional CCA protein from Vibrio cholerae serotype O1 (strain ATCC 39541 / Classical Ogawa 395 / O395).